We begin with the raw amino-acid sequence, 341 residues long: L-threonine 3-dehydrogenase (341 aa).

Cys-38 lines the Zn(2+) pocket. Residues Thr-40 and His-43 each act as charge relay system in the active site. Zn(2+)-binding residues include His-63, Glu-64, Cys-93, Cys-96, Cys-99, and Cys-107. Residues Ile-175, Asp-195, Arg-200, 262-264, and 286-287 contribute to the NAD(+) site; these read LGI and IY.

The protein belongs to the zinc-containing alcohol dehydrogenase family. In terms of assembly, homotetramer. It depends on Zn(2+) as a cofactor.

The protein resides in the cytoplasm. It carries out the reaction L-threonine + NAD(+) = (2S)-2-amino-3-oxobutanoate + NADH + H(+). It participates in amino-acid degradation; L-threonine degradation via oxydo-reductase pathway; glycine from L-threonine: step 1/2. Its function is as follows. Catalyzes the NAD(+)-dependent oxidation of L-threonine to 2-amino-3-ketobutyrate. The chain is L-threonine 3-dehydrogenase from Shewanella frigidimarina (strain NCIMB 400).